A 242-amino-acid chain; its full sequence is Uridylate kinase (242 aa).

17–20 lines the ATP pocket; that stretch reads KLGG. Gly58 provides a ligand contact to UMP. ATP contacts are provided by Gly59 and Arg63. UMP contacts are provided by residues Asp78 and 139-146; that span reads MGMPYFST. 2 residues coordinate ATP: Phe172 and Asp175.

It belongs to the UMP kinase family. As to quaternary structure, homohexamer.

The protein resides in the cytoplasm. The catalysed reaction is UMP + ATP = UDP + ADP. The protein operates within pyrimidine metabolism; CTP biosynthesis via de novo pathway; UDP from UMP (UMPK route): step 1/1. Its activity is regulated as follows. Inhibited by UTP. Functionally, catalyzes the reversible phosphorylation of UMP to UDP. The sequence is that of Uridylate kinase from Rhodococcus jostii (strain RHA1).